The following is a 123-amino-acid chain: Large ribosomal subunit protein bL12 (123 aa).

This sequence belongs to the bacterial ribosomal protein bL12 family. Homodimer. Part of the ribosomal stalk of the 50S ribosomal subunit. Forms a multimeric L10(L12)X complex, where L10 forms an elongated spine to which 2 to 4 L12 dimers bind in a sequential fashion. Binds GTP-bound translation factors.

Its function is as follows. Forms part of the ribosomal stalk which helps the ribosome interact with GTP-bound translation factors. Is thus essential for accurate translation. This is Large ribosomal subunit protein bL12 from Ectopseudomonas mendocina (strain ymp) (Pseudomonas mendocina).